Here is a 223-residue protein sequence, read N- to C-terminus: N-acetylmuramic acid 6-phosphate phosphatase (223 aa).

The Nucleophile role is filled by Asp-9. Positions 9, 11, and 168 each coordinate Mg(2+). Asp-11 (proton donor) is an active-site residue.

It belongs to the HAD-like hydrolase superfamily. CbbY/CbbZ/Gph/YieH family. Phosphatase MupP subfamily. It depends on Mg(2+) as a cofactor.

It catalyses the reaction N-acetyl-D-muramate 6-phosphate + H2O = N-acetyl-D-muramate + phosphate. The protein operates within cell wall biogenesis; peptidoglycan recycling. In terms of biological role, specifically catalyzes the dephosphorylation of N-acetylmuramate 6-phosphate (MurNAc-6P) to MurNac. Is involved in peptidoglycan recycling as part of a cell wall recycling pathway that bypasses de novo biosynthesis of the peptidoglycan precursor UDP-MurNAc. Plays a role in intrinsic resistance to fosfomycin, which targets the de novo synthesis of UDP-MurNAc. Shows a very low activity on GlcNAc-6P, and neither alpha-1-phosphorylated MurNAc, GlcNAc, or glucose nor glucosamine-6P or glucose-6P can be used as a substrate. The polypeptide is N-acetylmuramic acid 6-phosphate phosphatase (Pseudomonas putida (strain ATCC 47054 / DSM 6125 / CFBP 8728 / NCIMB 11950 / KT2440)).